Here is a 316-residue protein sequence, read N- to C-terminus: Acetaldehyde dehydrogenase (316 aa).

11–14 provides a ligand contact to NAD(+); it reads SGNI. Catalysis depends on C131, which acts as the Acyl-thioester intermediate. Residues 162–170 and N289 each bind NAD(+); that span reads SAGPGTRAN.

Belongs to the acetaldehyde dehydrogenase family. In terms of assembly, interacts with MhpE.

It carries out the reaction acetaldehyde + NAD(+) + CoA = acetyl-CoA + NADH + H(+). It participates in aromatic compound metabolism; 3-phenylpropanoate degradation. Its function is as follows. Catalyzes the conversion of acetaldehyde to acetyl-CoA, using NAD(+) and coenzyme A. Is the final enzyme in the meta-cleavage pathway for the degradation of aromatic compounds. This chain is Acetaldehyde dehydrogenase, found in Escherichia coli O81 (strain ED1a).